The sequence spans 271 residues: Interleukin-1 alpha (271 aa).

The propeptide occupies 1-112; sequence MAKVPDMFED…DSEEEIIKPR (112 aa). Residue lysine 82 is modified to N6-acetyllysine. The nuclear localization signal (NLS) stretch occupies residues 82–86; that stretch reads KKRRL. Serine 87 is subject to Phosphoserine. Residues asparagine 102 and asparagine 141 are each glycosylated (N-linked (GlcNAc...) asparagine).

It belongs to the IL-1 family. Monomer. Interacts with TMED10; the interaction mediates the translocation from the cytoplasm into the ERGIC (endoplasmic reticulum-Golgi intermediate compartment) and thereby secretion. Interacts with IL1R1. Interacts with S100A13; this interaction is the first step in the export of IL1A, followed by direct translocation of this complex across the plasma membrane. Acetylated within its nuclear localization sequence, which impacts subcellular localization. In terms of processing, proteolytic processed by CAPN1 in a calcium-dependent manner. Cleavage from 31 kDa precursor to 18 kDa biologically active molecules. Post-translationally, phosphorylated. Phosphorylation greatly enhances susceptibility to digestion and promotes the conversion of pre-IL1A alpha to the biologically active IL1A.

Its subcellular location is the nucleus. It is found in the cytoplasm. It localises to the secreted. Cytokine constitutively present intracellularly in nearly all resting non-hematopoietic cells that plays an important role in inflammation and bridges the innate and adaptive immune systems. After binding to its receptor IL1R1 together with its accessory protein IL1RAP, forms the high affinity interleukin-1 receptor complex. Signaling involves the recruitment of adapter molecules such as MYD88, IRAK1 or IRAK4. In turn, mediates the activation of NF-kappa-B and the three MAPK pathways p38, p42/p44 and JNK pathways. Within the cell, acts as an alarmin and cell death results in its liberation in the extracellular space after disruption of the cell membrane to induce inflammation and alert the host to injury or damage. In addition to its role as a danger signal, which occurs when the cytokine is passively released by cell necrosis, directly senses DNA damage and acts as signal for genotoxic stress without loss of cell integrity. This is Interleukin-1 alpha (IL1A) from Cercocebus atys (Sooty mangabey).